A 556-amino-acid chain; its full sequence is CBS domain-containing protein CBSCBSPB3 (556 aa).

2 stretches are compositionally biased toward polar residues: residues 1-20 (MSTQATGPSSTSGRRSNSTV) and 30-44 (PVQSENGSVNGNTSK). Residues 1–63 (MSTQATGPSS…SQAPSNGERT (63 aa)) are disordered. Serine 2 is modified (N-acetylserine). 4 consecutive CBS domains span residues 68–127 (RLSK…RPDQ), 134–189 (MTRN…RMEK), 235–294 (ITDN…LSPE), and 302–360 (MTPN…ENSS). Residues 414 to 502 (GNSFSFKFED…KVLRLHLDFT (89 aa)) form the PB1 domain. A helical transmembrane segment spans residues 527–549 (WVSWRGGVVVTGAVVLTSIAIVV).

It is found in the membrane. The sequence is that of CBS domain-containing protein CBSCBSPB3 (CBSCBSPB3) from Arabidopsis thaliana (Mouse-ear cress).